Reading from the N-terminus, the 188-residue chain is dCTP deaminase (188 aa).

DCTP contacts are provided by residues 111–116 (KSTYAR), 135–137 (TLE), glutamine 156, tyrosine 170, and glutamine 180. Glutamate 137 acts as the Proton donor/acceptor in catalysis.

It belongs to the dCTP deaminase family. Homotrimer.

The catalysed reaction is dCTP + H2O + H(+) = dUTP + NH4(+). It participates in pyrimidine metabolism; dUMP biosynthesis; dUMP from dCTP (dUTP route): step 1/2. Catalyzes the deamination of dCTP to dUTP. The chain is dCTP deaminase from Thioalkalivibrio sulfidiphilus (strain HL-EbGR7).